A 455-amino-acid polypeptide reads, in one-letter code: Putative RNA polymerase II subunit B1 CTD phosphatase rpap-2 (455 aa).

The RTR1-type zinc-finger motif lies at 36–121 (EHLPHLHCLG…LDEHPLWITG (86 aa)). 4 residues coordinate Zn(2+): Cys-59, Cys-64, Cys-97, and Cys-101.

It belongs to the RPAP2 family.

The protein localises to the nucleus. The catalysed reaction is O-phospho-L-seryl-[protein] + H2O = L-seryl-[protein] + phosphate. The enzyme catalyses O-phospho-L-threonyl-[protein] + H2O = L-threonyl-[protein] + phosphate. In terms of biological role, putative RNA polymerase II subunit B1 C-terminal domain (CTD) phosphatase involved in RNA polymerase II transcription regulation. This Caenorhabditis elegans protein is Putative RNA polymerase II subunit B1 CTD phosphatase rpap-2.